Consider the following 898-residue polypeptide: Magnesium-transporting ATPase, P-type 1 (898 aa).

Topologically, residues 1 to 94 (MFKEIFTRLI…QPSPWWVHLW (94 aa)) are cytoplasmic. Residues 95 to 115 (VCYRNPFNILLTILGAISYAT) traverse the membrane as a helical segment. Position 116 (Glu116) is a topological domain, extracellular. Residues 117 to 137 (DLFAAGVIALMVAISTLLNFI) traverse the membrane as a helical segment. The Cytoplasmic portion of the chain corresponds to 138-287 (QEARSTKAAD…PNAFQQGISR (150 aa)). A helical transmembrane segment spans residues 288 to 308 (VSMLLIRFMLVMAPVVLLING). Residues 309–317 (YTKGDWWEA) lie on the Extracellular side of the membrane. A helical membrane pass occupies residues 318–335 (ALFALSVAVGLTPEMLPM). Glu331 provides a ligand contact to Mg(2+). The Cytoplasmic segment spans residues 336–695 (IVTSTLARGA…IEGRRTFANM (360 aa)). Residue Asp373 is the 4-aspartylphosphate intermediate of the active site. Residues Asp641, Asp645, and Asn709 each coordinate Mg(2+). Residues 696 to 715 (LKYIKMTASSNFGNVFSVLV) form a helical membrane-spanning segment. Over 716 to 724 (ASAFLPFLP) the chain is Extracellular. A helical transmembrane segment spans residues 725–744 (MLPLHLLIQNLLYDVSQVAI). Mg(2+)-binding residues include Asn734 and Asp738. Residues 745–766 (PFDNVDDEQIQKPQRWNPADLG) are Cytoplasmic-facing. Residues 767–790 (RFMIFFGPISSIFDILTFCLMWWV) form a helical membrane-spanning segment. The Extracellular segment spans residues 791–799 (FHANTPETQ). Residues 800–818 (TLFQSGWFVVGLLSQTLIV) traverse the membrane as a helical segment. Over 819–831 (HMIRTRRVPFIQS) the chain is Cytoplasmic. Residues 832-851 (CASWPLMIMTVIVMIVGIAL) form a helical membrane-spanning segment. Over 852-866 (PFSPLASYLQLQALP) the chain is Extracellular. A helical transmembrane segment spans residues 867–886 (LSYFPWLVAILAGYMTLTQL). Over 887–898 (VKGFYSRRYGWQ) the chain is Cytoplasmic.

This sequence belongs to the cation transport ATPase (P-type) (TC 3.A.3) family. Type IIIB subfamily.

It localises to the cell inner membrane. It catalyses the reaction Mg(2+)(out) + ATP + H2O = Mg(2+)(in) + ADP + phosphate + H(+). Mediates magnesium influx to the cytosol. The sequence is that of Magnesium-transporting ATPase, P-type 1 (mgtA) from Escherichia coli O157:H7.